The sequence spans 206 residues: Ras-related protein ralB-A (206 aa).

21-28 (GSGGVGKS) is a GTP binding site. The Effector region motif lies at 43-51 (YEPTKADSY). Residues 68 to 72 (DTAGQ) and 128 to 131 (NKSD) each bind GTP. Over residues 180-189 (KMSENKDKNG) the composition is skewed to basic and acidic residues. Residues 180–206 (KMSENKDKNGKKSGKSKKGFKQRCCLL) are disordered. Positions 190-200 (KKSGKSKKGFK) are enriched in basic residues. C203 carries the post-translational modification Cysteine methyl ester. The S-geranylgeranyl cysteine moiety is linked to residue C203. Residues 204–206 (CLL) constitute a propeptide, removed in mature form.

Belongs to the small GTPase superfamily. Ras family. As to quaternary structure, interacts with ralbp1 and rap1gds1. In terms of tissue distribution, weakly expressed in adult tissues and highest levels were found in heart, brain and testes.

It localises to the cell membrane. Its subcellular location is the midbody. It catalyses the reaction GTP + H2O = GDP + phosphate + H(+). In terms of biological role, multifunctional GTPase involved in a variety of cellular processes including gene expression, cell migration, cell proliferation, oncogenic transformation and membrane trafficking. Accomplishes its multiple functions by interacting with distinct downstream effectors. Acts as a GTP sensor for GTP-dependent exocytosis of dense core vesicles. Required both to stabilize the assembly of the exocyst complex and to localize functional exocyst complexes to the leading edge of migrating cells. Required for suppression of apoptosis. In late stages of cytokinesis, upon completion of the bridge formation between dividing cells, mediates exocyst recruitment to the midbody to drive abscission. Regulates the actin cytoskeleton to play a role in gastrulation or neurulation. During the cleavage stages, the GTP-bound form induces a cortical reaction that affects the localization of pigment granules. Activated by the FGF pathway via ras and ral-GDS, but independently of raf. Directs ralbp1 to the plasma membrane. Involved in ligand-dependent receptor mediated endocytosis of the EGF and insulin receptors. This chain is Ras-related protein ralB-A (ralb-a), found in Xenopus laevis (African clawed frog).